The chain runs to 400 residues: Elongation factor Tu 2 (400 aa).

One can recognise a tr-type G domain in the interval 10–209; that stretch reads KPHLNIGTIG…AVDSYIPLPQ (200 aa). The G1 stretch occupies residues 19–26; that stretch reads GHIDHGKT. 19–26 contacts GTP; sequence GHIDHGKT. T26 is a Mg(2+) binding site. Residues 60–64 form a G2 region; sequence GITIN. The G3 stretch occupies residues 81–84; the sequence is DCPG. GTP-binding positions include 81-85 and 136-139; these read DCPGH and NKID. Positions 136–139 are G4; it reads NKID. Residues 174–176 are G5; that stretch reads SAL.

It belongs to the TRAFAC class translation factor GTPase superfamily. Classic translation factor GTPase family. EF-Tu/EF-1A subfamily. In terms of assembly, monomer.

It localises to the cytoplasm. The enzyme catalyses GTP + H2O = GDP + phosphate + H(+). In terms of biological role, GTP hydrolase that promotes the GTP-dependent binding of aminoacyl-tRNA to the A-site of ribosomes during protein biosynthesis. This chain is Elongation factor Tu 2, found in Syntrophomonas wolfei subsp. wolfei (strain DSM 2245B / Goettingen).